We begin with the raw amino-acid sequence, 180 residues long: Small ribosomal subunit protein bS18 (180 aa).

Disordered regions lie at residues 1–26 and 53–82; these read MKNK…AHKV and YSDK…DKES.

This sequence belongs to the bacterial ribosomal protein bS18 family. As to quaternary structure, part of the 30S ribosomal subunit. Forms a tight heterodimer with protein bS6.

Binds as a heterodimer with protein bS6 to the central domain of the 16S rRNA, where it helps stabilize the platform of the 30S subunit. The polypeptide is Small ribosomal subunit protein bS18 (Karelsulcia muelleri (strain GWSS) (Sulcia muelleri)).